A 121-amino-acid chain; its full sequence is Dihydroneopterin aldolase (121 aa).

Substrate contacts are provided by residues glutamate 22, tyrosine 54, and 73–74 (IE). Lysine 100 functions as the Proton donor/acceptor in the catalytic mechanism.

This sequence belongs to the DHNA family. Homooctamer. Four molecules assemble into a ring, and two rings come together to give a cylinder with a hole of at least 13 a diameter.

It carries out the reaction 7,8-dihydroneopterin = 6-hydroxymethyl-7,8-dihydropterin + glycolaldehyde. The catalysed reaction is 7,8-dihydroneopterin = 7,8-dihydromonapterin. The protein operates within cofactor biosynthesis; tetrahydrofolate biosynthesis; 2-amino-4-hydroxy-6-hydroxymethyl-7,8-dihydropteridine diphosphate from 7,8-dihydroneopterin triphosphate: step 3/4. Catalyzes the conversion of 7,8-dihydroneopterin to 6-hydroxymethyl-7,8-dihydropterin. Can also catalyze the epimerization of carbon 2' of dihydroneopterin to dihydromonapterin. The protein is Dihydroneopterin aldolase (folB) of Staphylococcus epidermidis (strain ATCC 35984 / DSM 28319 / BCRC 17069 / CCUG 31568 / BM 3577 / RP62A).